Consider the following 40-residue polypeptide: Amyloid-beta precursor protein (40 aa).

It belongs to the APP family. As to quaternary structure, binds, via its C-terminus, to the PID domain of several cytoplasmic proteins, including APBB family members, the APBA family, MAPK8IP1, SHC1 and NUMB and DAB1. Binding to DAB1 inhibits its serine phosphorylation. Interacts (via NPXY motif) with DAB2 (via PID domain); the interaction is impaired by tyrosine phosphorylation of the NPXY motif. Also interacts with GPCR-like protein BPP, APPBP1, IB1, KNS2 (via its TPR domains), APPBP2 (via BaSS) and DDB1. In vitro, it binds MAPT via the MT-binding domains. Associates with microtubules in the presence of ATP and in a kinesin-dependent manner. Interacts, through a C-terminal domain, with GNAO1. Interacts with CPEB1, ANKS1B and AGER. Interacts with ITM2B. Interacts with ITM2C. Interacts with IDE. Can form homodimers; dimerization is enhanced in the presence of Cu(2+) ions. Can form homodimers; this is promoted by heparin binding. Interacts with SORL1 (via N-terminal ectodomain); this interaction retains APP in the trans-Golgi network and reduces processing into soluble APP-alpha and amyloid-beta peptides. Interacts with PLD3. Interacts with VDAC1. Interacts with NSG1; could regulate APP processing. Interacts with LRRK2. Interacts (via cytoplasmic domain) with KIF5B. Interacts (via C-terminus) with APBB2/FE65L1 (via C-terminus). Interacts (via intracellular domain) with APBB3. Proteolytically processed under normal cellular conditions. Cleavage either by alpha-secretase, beta-secretase or theta-secretase leads to generation and extracellular release of soluble APP peptides, S-APP-alpha and S-APP-beta, and the retention of corresponding membrane-anchored C-terminal fragments, C80, C83 and C99. Subsequent processing of C80 and C83 by gamma-secretase yields P3 peptides. This is the major secretory pathway and is non-amyloidogenic. Alternatively, presenilin/nicastrin-mediated gamma-secretase processing of C99 releases the amyloid-beta proteins, amyloid-beta protein 40 and amyloid-beta protein 42, major components of amyloid plaques, and the cytotoxic C-terminal fragments, gamma-CTF(50), gamma-CTF(57) and gamma-CTF(59). PSEN1 cleavage is more efficient with C83 than with C99 as substrate (in vitro). Amyloid-beta protein 40 and Amyloid-beta protein 42 are cleaved by ACE. Many other minor amyloid-beta peptides, amyloid-beta 1-X peptides, are found in cerebral spinal fluid (CSF) including the amyloid-beta X-15 peptides, produced from the cleavage by alpha-secretase.

It is found in the cell membrane. The protein resides in the membrane. It localises to the perikaryon. Its subcellular location is the cell projection. The protein localises to the growth cone. It is found in the clathrin-coated pit. The protein resides in the early endosome. It localises to the cytoplasmic vesicle. Functions as a cell surface receptor and performs physiological functions on the surface of neurons relevant to neurite growth, neuronal adhesion and axonogenesis. Interaction between APP molecules on neighboring cells promotes synaptogenesis. Involved in cell mobility and transcription regulation through protein-protein interactions. Can promote transcription activation through binding to APBB1-KAT5 and inhibit Notch signaling through interaction with Numb. Couples to apoptosis-inducing pathways such as those mediated by G(o) and JIP. Inhibits G(o)-alpha ATPase activity. Acts as a kinesin I membrane receptor, mediating the axonal transport of beta-secretase and presenilin 1. May be involved in copper homeostasis/oxidative stress through copper ion reduction. In vitro, copper-metallated APP induces neuronal death directly or is potentiated through Cu(2+)-mediated low-density lipoprotein oxidation. Can regulate neurite outgrowth through binding to components of the extracellular matrix such as heparin and collagen I and IV. Induces a AGER-dependent pathway that involves activation of p38 MAPK, resulting in internalization of amyloid-beta peptide and mitochondrial dysfunction in cultured cortical neurons. Provides Cu(2+) ions for GPC1 which are required for release of nitric oxide (NO) and subsequent degradation of the heparan sulfate chains on GPC1. This chain is Amyloid-beta precursor protein, found in Felis catus (Cat).